A 325-amino-acid chain; its full sequence is Intelectin (325 aa).

A signal peptide spans 1–23 (MKYCVLLIMIHLLLVELPQFPEA). The 223-residue stretch at 44-266 (IRSSYIGRSC…AAMAICSGVK (223 aa)) folds into the Fibrinogen C-terminal domain. Cys-53 and Cys-82 are joined by a disulfide. The Ca(2+) site is built by His-98, Glu-99, Asn-101, Gly-104, Gly-109, Asp-110, Asp-145, Glu-274, Glu-286, and Asp-294. Disulfide bonds link Cys-106-Cys-292 and Cys-262-Cys-277. A carbohydrate contacts are provided by residues 274–275 (EH) and Glu-286.

In terms of tissue distribution, expressed at high levels in caudal kidney, liver, and swim bladder. Also expressed in gill, spleen, intestine and head kidney. Not detected in heart.

In terms of biological role, may be involved in innate immune surveillance. May specifically recognize carbohydrate chains of pathogens and bacterial components in a calcium-dependent manner. In vitro binds N-acetylglucosamine residues. The protein is Intelectin of Oncorhynchus mykiss (Rainbow trout).